The primary structure comprises 901 residues: HTH-type transcriptional regulator MalT (901 aa).

Serine 39–threonine 46 is an ATP binding site. The HTH luxR-type domain occupies glutamate 829–leucine 894. The segment at residues asparagine 853 to arginine 872 is a DNA-binding region (H-T-H motif).

This sequence belongs to the MalT family. In terms of assembly, monomer in solution. Oligomerizes to an active state in the presence of the positive effectors ATP and maltotriose.

Activated by ATP and maltotriose, which are both required for DNA binding. Its function is as follows. Positively regulates the transcription of the maltose regulon whose gene products are responsible for uptake and catabolism of malto-oligosaccharides. Specifically binds to the promoter region of its target genes, recognizing a short DNA motif called the MalT box. In Escherichia coli O6:H1 (strain CFT073 / ATCC 700928 / UPEC), this protein is HTH-type transcriptional regulator MalT.